We begin with the raw amino-acid sequence, 155 residues long: Cyanate hydratase (155 aa).

Active-site residues include R92, E95, and S118.

The protein belongs to the cyanase family.

It catalyses the reaction cyanate + hydrogencarbonate + 3 H(+) = NH4(+) + 2 CO2. In terms of biological role, catalyzes the reaction of cyanate with bicarbonate to produce ammonia and carbon dioxide. The polypeptide is Cyanate hydratase (Mycobacterium avium (strain 104)).